Reading from the N-terminus, the 311-residue chain is Probable manganese-dependent inorganic pyrophosphatase (311 aa).

Mn(2+) contacts are provided by His-9, Asp-13, Asp-15, Asp-77, His-99, and Asp-151.

Belongs to the PPase class C family. Mn(2+) serves as cofactor.

It is found in the cytoplasm. It catalyses the reaction diphosphate + H2O = 2 phosphate + H(+). This is Probable manganese-dependent inorganic pyrophosphatase from Streptococcus pyogenes serotype M1.